Reading from the N-terminus, the 488-residue chain is Regulatory protein ViaA (488 aa).

This sequence belongs to the ViaA family. Homodimer. Interacts with RavA.

It is found in the cytoplasm. Its function is as follows. Component of the RavA-ViaA chaperone complex, which may act on the membrane to optimize the function of some of the respiratory chains. ViaA stimulates the ATPase activity of RavA. The sequence is that of Regulatory protein ViaA from Yersinia enterocolitica serotype O:8 / biotype 1B (strain NCTC 13174 / 8081).